We begin with the raw amino-acid sequence, 56 residues long: Small ribosomal subunit protein uS14 (56 aa).

Residues Cys21, Cys24, Cys39, and Cys42 each contribute to the Zn(2+) site.

The protein belongs to the universal ribosomal protein uS14 family. In terms of assembly, component of the 40S small ribosomal subunit. Zn(2+) serves as cofactor.

The protein localises to the cytoplasm. It is found in the cytosol. The protein resides in the rough endoplasmic reticulum. This is Small ribosomal subunit protein uS14 (RpS29) from Culex quinquefasciatus (Southern house mosquito).